The sequence spans 463 residues: ATP-dependent protease ATPase subunit HslU (463 aa).

Residues Val21, 63 to 68, Asp276, Glu341, and Arg413 each bind ATP; that span reads GVGKTE.

Belongs to the ClpX chaperone family. HslU subfamily. In terms of assembly, a double ring-shaped homohexamer of HslV is capped on each side by a ring-shaped HslU homohexamer. The assembly of the HslU/HslV complex is dependent on binding of ATP.

It localises to the cytoplasm. Functionally, ATPase subunit of a proteasome-like degradation complex; this subunit has chaperone activity. The binding of ATP and its subsequent hydrolysis by HslU are essential for unfolding of protein substrates subsequently hydrolyzed by HslV. HslU recognizes the N-terminal part of its protein substrates and unfolds these before they are guided to HslV for hydrolysis. In Thermotoga petrophila (strain ATCC BAA-488 / DSM 13995 / JCM 10881 / RKU-1), this protein is ATP-dependent protease ATPase subunit HslU.